Reading from the N-terminus, the 427-residue chain is Serine--tRNA ligase (427 aa).

231–233 (TAE) contributes to the L-serine binding site. 262-264 (RSE) provides a ligand contact to ATP. Residue Glu-285 participates in L-serine binding. 349–352 (EISS) contributes to the ATP binding site. Residue Ser-385 participates in L-serine binding.

The protein belongs to the class-II aminoacyl-tRNA synthetase family. Type-1 seryl-tRNA synthetase subfamily. Homodimer. The tRNA molecule binds across the dimer.

The protein resides in the cytoplasm. It carries out the reaction tRNA(Ser) + L-serine + ATP = L-seryl-tRNA(Ser) + AMP + diphosphate + H(+). The catalysed reaction is tRNA(Sec) + L-serine + ATP = L-seryl-tRNA(Sec) + AMP + diphosphate + H(+). It functions in the pathway aminoacyl-tRNA biosynthesis; selenocysteinyl-tRNA(Sec) biosynthesis; L-seryl-tRNA(Sec) from L-serine and tRNA(Sec): step 1/1. In terms of biological role, catalyzes the attachment of serine to tRNA(Ser). Is also able to aminoacylate tRNA(Sec) with serine, to form the misacylated tRNA L-seryl-tRNA(Sec), which will be further converted into selenocysteinyl-tRNA(Sec). In Rhizobium etli (strain ATCC 51251 / DSM 11541 / JCM 21823 / NBRC 15573 / CFN 42), this protein is Serine--tRNA ligase.